Consider the following 459-residue polypeptide: MAP kinase-interacting serine/threonine-protein kinase 2 (459 aa).

Residues 37 to 67 (DFSPQCEARPDMPSSQPIDIPDAKKRGRKKK) form a disordered region. The Nuclear localization signal signature appears at 60-66 (KKRGRKK). Position 74 is a phosphoserine (Ser-74). In terms of domain architecture, Protein kinase spans 84 to 368 (QLQEDVLGEG…AAQVLQHPWV (285 aa)). Residues 90-98 (LGEGAHARV) and Lys-113 contribute to the ATP site. 160–162 (EKM) is a binding site for staurosporine. The active-site Proton acceptor is the Asp-205. Residue Glu-209 participates in staurosporine binding. Residues Thr-244 and Thr-249 each carry the phosphothreonine modification. Cys-299, Cys-311, and Cys-314 together coordinate Zn(2+). The residue at position 379 (Thr-379) is a Phosphothreonine. A phosphoserine mark is found at Ser-431 and Ser-434. The MAP kinase binding signature appears at 438–442 (LAQRR). Ser-446 is modified (phosphoserine). Residue Thr-450 is modified to Phosphothreonine.

The protein belongs to the protein kinase superfamily. CAMK Ser/Thr protein kinase family. As to quaternary structure, interacts with ESR2 and EIF4E in the nucleus. Monomer. Interacts with the C-terminal regions of EIF4G1 and EIF4G2; this interaction is promoted when MAPK pathways are repressed but repressed upon ERK proteins activation. Also binds to dephosphorylated MAPK3/ERK1 and MAPK1/ERK2. Interaction with phosphorylated MAPK3/ERK1 and MAPK1/ERK2 protects it from dephosphorylation and inactivation. Mg(2+) is required as a cofactor. The cofactor is Zn(2+). Post-translationally, dual phosphorylation of Thr-244 and Thr-249 activates the kinase. Phosphorylation of Thr-379 activates the kinase. Phosphorylated upon arsenic trioxide As(2)O(3) treatment. Phosphorylated by MAPK1/ERK2, MAPK11 and MAPK14. Dephosphorylated by PP2A. Ubiquitously expressed in all tissues examined, with high levels in skeletal muscle and low levels in brain.

It localises to the cytoplasm. The protein localises to the nucleus. It is found in the PML body. The enzyme catalyses L-seryl-[protein] + ATP = O-phospho-L-seryl-[protein] + ADP + H(+). The catalysed reaction is L-threonyl-[protein] + ATP = O-phospho-L-threonyl-[protein] + ADP + H(+). Its activity is regulated as follows. Inhibited by CGP57380 and staurosporine. Its function is as follows. Serine/threonine-protein kinase that phosphorylates SFPQ/PSF, HNRNPA1 and EIF4E. May play a role in the response to environmental stress and cytokines. Appears to regulate translation by phosphorylating EIF4E, thus increasing the affinity of this protein for the 7-methylguanosine-containing mRNA cap. Required for mediating PP2A-inhibition-induced EIF4E phosphorylation. Triggers EIF4E shuttling from cytoplasm to nucleus. Enhances the formation of EIF4F complex in pachytene spermatocytes, thus promoting mRNA translation during spermatogenesis. Displays a high basal kinase activity. Acts as a mediator of the suppressive effects of IFNgamma on hematopoiesis. Negative regulator for signals that control generation of arsenic trioxide As(2)O(3)-dependent apoptosis and anti-leukemic responses. Involved in anti-apoptotic signaling in response to serum withdrawal. This chain is MAP kinase-interacting serine/threonine-protein kinase 2 (Mknk2), found in Mus musculus (Mouse).